A 159-amino-acid chain; its full sequence is Phosphopantetheine adenylyltransferase (159 aa).

Threonine 10 provides a ligand contact to substrate. ATP contacts are provided by residues 10–11 and histidine 18; that span reads TF. Substrate is bound by residues lysine 42, leucine 74, and arginine 88. ATP-binding positions include 89 to 91, glutamate 99, and 124 to 130; these read GLR and NAFISSS.

The protein belongs to the bacterial CoaD family. In terms of assembly, homohexamer. The cofactor is Mg(2+).

It is found in the cytoplasm. The catalysed reaction is (R)-4'-phosphopantetheine + ATP + H(+) = 3'-dephospho-CoA + diphosphate. Its pathway is cofactor biosynthesis; coenzyme A biosynthesis; CoA from (R)-pantothenate: step 4/5. Functionally, reversibly transfers an adenylyl group from ATP to 4'-phosphopantetheine, yielding dephospho-CoA (dPCoA) and pyrophosphate. The chain is Phosphopantetheine adenylyltransferase from Campylobacter fetus subsp. fetus (strain 82-40).